A 271-amino-acid chain; its full sequence is Short chain dehydrogenase virK (271 aa).

Residues leucine 13, aspartate 59, asparagine 87, tyrosine 168, lysine 172, valine 201, and threonine 203 each coordinate NADP(+). The active-site Proton donor is tyrosine 168. The active-site Lowers pKa of active site Tyr is lysine 172.

This sequence belongs to the short-chain dehydrogenases/reductases (SDR) family.

Its pathway is secondary metabolite biosynthesis. Functionally, short chain dehydrogenase; part of the gene cluster that mediates the biosynthesis of virensols and trichoxide, fungal natural products that contain or are derived from a salicylaldehyde core. The pathway begins with the synthesis of the reduced chain in virensol C by the highly reducing polyketide synthase virA via condensation of one acetate and 8 malonate units. VirA has interesting programming rules since the first 2 ketides are fully reduced, the 3 following ketides undergo beta-dehydration, and the last 3 ketides are only reduced to beta-hydroxys to yield the trihydroxy portion. The production of aldehyde virensol C by virA alone is surprising, since virA does not contain a reductase (R) domain that is typically associated with reductive product release in HRPKS. The cupin-domain enzyme virC is involved in enhancing virA product turnover. The short-chain dehydrogenase virB then oxidizes the C-7 alcohol of virensol C to a ketone, yielding virensol D. Virensol D is further transformed to salicylaldehyde 5-deoxyaurocitrin by the short-chain dehydrogenase virD. VirD catalyzes the dehydrogenation of C-3 to form the beta-ketone aldehyde, which is followed by the generation of the nucleophilic C-2 that is required for the intramolecular aldol condensation between C-2 and C-7, itself followed by dehydration and aromatization which leads to salicylaldehyde 5-deoxyaurocitrin. While the dehydrogenation of virensol D is definitely catalyzed by virD, the aldol condensation and dehydration may be uncatalyzed or assisted by virD. The short chain dehydrogenase virG then converts salicylaldehyde 5-deoxyaurocitrin into virensol B which is further hydroxylated by the cytochrome P450 monooxygenase virE to yield the hydroquinone virensol A. VirI then may oxidize virensol A to form the quinone, while virH performs the epoxidation. Finally, the two remaining short-chain dehydrogenases, virK and virL, are probably responsible for reducing the ketones to the corresponding alcohols to furnish the epoxycyclohexanol structure in trichoxide. The chain is Short chain dehydrogenase virK from Hypocrea virens (strain Gv29-8 / FGSC 10586) (Gliocladium virens).